The following is a 146-amino-acid chain: MAFWDEKTLAQMNTEEWESLCDGCGKCCLNKLIDDETEELYYTNAACQLLDNKAGHCKSYEQRFNFVPSCTKVTVDNLESLTWLPDSCAYRRLLQGRELPSWHPLRTGSKEAMILAGMSVAGKVTCETKIRDIEDHIVLWPMKDVE.

This sequence belongs to the UPF0260 family.

The protein is UPF0260 protein Spea_2441 of Shewanella pealeana (strain ATCC 700345 / ANG-SQ1).